A 592-amino-acid chain; its full sequence is Aspartate--tRNA(Asp/Asn) ligase (592 aa).

Glu177 lines the L-aspartate pocket. Residues 201-204 (QIFK) form an aspartate region. L-aspartate contacts are provided by Arg223 and His452. 223-225 (RDE) is an ATP binding site. Glu486 provides a ligand contact to ATP. Arg493 is an L-aspartate binding site. An ATP-binding site is contributed by 538–541 (GIDR).

The protein belongs to the class-II aminoacyl-tRNA synthetase family. Type 1 subfamily. Homodimer.

Its subcellular location is the cytoplasm. The catalysed reaction is tRNA(Asx) + L-aspartate + ATP = L-aspartyl-tRNA(Asx) + AMP + diphosphate. Functionally, aspartyl-tRNA synthetase with relaxed tRNA specificity since it is able to aspartylate not only its cognate tRNA(Asp) but also tRNA(Asn). Reaction proceeds in two steps: L-aspartate is first activated by ATP to form Asp-AMP and then transferred to the acceptor end of tRNA(Asp/Asn). In Anaplasma marginale (strain Florida), this protein is Aspartate--tRNA(Asp/Asn) ligase.